The following is a 360-amino-acid chain: Photosystem II protein D1 2 (360 aa).

3 helical membrane-spanning segments follow: residues 29 to 46, 118 to 133, and 142 to 156; these read YIGWFGVLMIPTLLTAVT, HYMIGCICYLGRQWEY, and WICVAYSAPLAATYS. Histidine 118 contributes to the chlorophyll a binding site. Tyrosine 126 contributes to the pheophytin a binding site. Aspartate 170 and glutamate 189 together coordinate [CaMn4O5] cluster. A helical membrane pass occupies residues 197–218; sequence FHMFGVAGVLGGSLFAAMHGSL. Residue histidine 198 participates in chlorophyll a binding. A quinone is bound by residues histidine 215 and 264-265; that span reads SF. Histidine 215 is a binding site for Fe cation. Histidine 272 contacts Fe cation. The helical transmembrane segment at 274–288 threads the bilayer; the sequence is FLGAWPVVCIWLTAM. Residues histidine 332, glutamate 333, aspartate 342, and alanine 344 each contribute to the [CaMn4O5] cluster site. The propeptide occupies 345 to 360; that stretch reads AGESAPVALTAPVING.

The protein belongs to the reaction center PufL/M/PsbA/D family. In terms of assembly, PSII is composed of 1 copy each of membrane proteins PsbA, PsbB, PsbC, PsbD, PsbE, PsbF, PsbH, PsbI, PsbJ, PsbK, PsbL, PsbM, PsbT, PsbX, PsbY, PsbZ, Psb30/Ycf12, peripheral proteins PsbO, CyanoQ (PsbQ), PsbU, PsbV and a large number of cofactors. It forms dimeric complexes. The cofactor is The D1/D2 heterodimer binds P680, chlorophylls that are the primary electron donor of PSII, and subsequent electron acceptors. It shares a non-heme iron and each subunit binds pheophytin, quinone, additional chlorophylls, carotenoids and lipids. D1 provides most of the ligands for the Mn4-Ca-O5 cluster of the oxygen-evolving complex (OEC). There is also a Cl(-1) ion associated with D1 and D2, which is required for oxygen evolution. The PSII complex binds additional chlorophylls, carotenoids and specific lipids.. Post-translationally, tyr-161 forms a radical intermediate that is referred to as redox-active TyrZ, YZ or Y-Z. C-terminally processed by CtpA; processing is essential to allow assembly of the oxygen-evolving complex and thus photosynthetic growth.

The protein localises to the cellular thylakoid membrane. It catalyses the reaction 2 a plastoquinone + 4 hnu + 2 H2O = 2 a plastoquinol + O2. Functionally, photosystem II (PSII) is a light-driven water:plastoquinone oxidoreductase that uses light energy to abstract electrons from H(2)O, generating O(2) and a proton gradient subsequently used for ATP formation. It consists of a core antenna complex that captures photons, and an electron transfer chain that converts photonic excitation into a charge separation. The D1/D2 (PsbA/PsbD) reaction center heterodimer binds P680, the primary electron donor of PSII as well as several subsequent electron acceptors. This chain is Photosystem II protein D1 2, found in Acaryochloris marina (strain MBIC 11017).